A 229-amino-acid chain; its full sequence is Cytochrome c oxidase subunit 2 (229 aa).

Over 1-26 (MSTWANLGLQDSASPLMEQLIFFHDH) the chain is Mitochondrial intermembrane. The chain crosses the membrane as a helical span at residues 27–48 (ALLILVMITVLVGYLMFMLFFN). Residues 49-62 (SYVNRFLLHGQLIE) lie on the Mitochondrial matrix side of the membrane. A helical transmembrane segment spans residues 63-82 (MIWTILPAIILLFIAMPSLR). Residues 83 to 229 (LLYLLDEINE…IKWISNSVNS (147 aa)) are Mitochondrial intermembrane-facing. Positions 161, 196, 198, 200, 204, and 207 each coordinate Cu cation. Glutamate 198 lines the Mg(2+) pocket.

It belongs to the cytochrome c oxidase subunit 2 family. Component of the cytochrome c oxidase (complex IV, CIV), a multisubunit enzyme composed of a catalytic core of 3 subunits and several supernumerary subunits. The complex exists as a monomer or a dimer and forms supercomplexes (SCs) in the inner mitochondrial membrane with ubiquinol-cytochrome c oxidoreductase (cytochrome b-c1 complex, complex III, CIII). It depends on Cu cation as a cofactor.

Its subcellular location is the mitochondrion inner membrane. It catalyses the reaction 4 Fe(II)-[cytochrome c] + O2 + 8 H(+)(in) = 4 Fe(III)-[cytochrome c] + 2 H2O + 4 H(+)(out). Its function is as follows. Component of the cytochrome c oxidase, the last enzyme in the mitochondrial electron transport chain which drives oxidative phosphorylation. The respiratory chain contains 3 multisubunit complexes succinate dehydrogenase (complex II, CII), ubiquinol-cytochrome c oxidoreductase (cytochrome b-c1 complex, complex III, CIII) and cytochrome c oxidase (complex IV, CIV), that cooperate to transfer electrons derived from NADH and succinate to molecular oxygen, creating an electrochemical gradient over the inner membrane that drives transmembrane transport and the ATP synthase. Cytochrome c oxidase is the component of the respiratory chain that catalyzes the reduction of oxygen to water. Electrons originating from reduced cytochrome c in the intermembrane space (IMS) are transferred via the dinuclear copper A center (CU(A)) of subunit 2 and heme A of subunit 1 to the active site in subunit 1, a binuclear center (BNC) formed by heme A3 and copper B (CU(B)). The BNC reduces molecular oxygen to 2 water molecules using 4 electrons from cytochrome c in the IMS and 4 protons from the mitochondrial matrix. The sequence is that of Cytochrome c oxidase subunit 2 (mt:CoII) from Drosophila affinis (Fruit fly).